The following is a 400-amino-acid chain: Carnosine N-methyltransferase (400 aa).

Positions 1–51 (MQRRQRAPPASQPAQDGGRSEDVEVQFSAGRLGSAAPAGPPARGTAEDEER) are disordered. Over residues 28–44 (SAGRLGSAAPAGPPARG) the composition is skewed to low complexity. S-adenosyl-L-methionine-binding residues include Gln155, Arg158, Gly199, Glu220, Asp286, Phe287, and Cys303. Residue Asp307 participates in carnosine binding. Tyr315 is a binding site for S-adenosyl-L-methionine. Carnosine contacts are provided by His338 and Tyr389.

The protein belongs to the carnosine N-methyltransferase family. In terms of assembly, homodimer. Each monomer accommodates one molecule of carnosine in its active pocket, precisely anchoring the histidine imidazole ring such that only N1 is exposed and deprotonated for methylation.

It is found in the cytoplasm. Its subcellular location is the cytosol. It localises to the nucleus. The enzyme catalyses carnosine + S-adenosyl-L-methionine = anserine + S-adenosyl-L-homocysteine + H(+). N-methyltransferase that catalyzes the formation of anserine (beta-alanyl-N(Pi)-methyl-L-histidine) from carnosine. Anserine, a methylated derivative of carnosine (beta-alanyl-L-histidine), is an abundant constituent of vertebrate skeletal muscles. Also methylates other L-histidine-containing di- and tripeptides such as Gly-Gly-His, Gly-His and homocarnosine (GABA-His). The chain is Carnosine N-methyltransferase from Mus musculus (Mouse).